The following is a 183-amino-acid chain: Outer membrane protein H.8 (183 aa).

A signal peptide spans 1 to 17; sequence MKAYLALISAAVIGLAA. A lipid anchor (N-palmitoyl cysteine) is attached at cysteine 18. Residue cysteine 18 is the site of S-diacylglycerol cysteine attachment. The interval 27 to 51 is disordered; the sequence is AEATPAAEAPASEAPAAEAAPADAA. Residues 57 to 183 form the Plastocyanin-like domain; it reads GNCAATVESN…LMNGKVTLVD (127 aa). Cu cation-binding residues include histidine 102, cysteine 166, histidine 171, and methionine 175.

Cu cation is required as a cofactor.

It localises to the cell outer membrane. The protein is Outer membrane protein H.8 of Neisseria meningitidis serogroup C / serotype 2a (strain ATCC 700532 / DSM 15464 / FAM18).